Reading from the N-terminus, the 352-residue chain is DNA polymerase IV (352 aa).

In terms of domain architecture, UmuC spans 7-187 (IIHIDMDCFY…LSLKKIPGIG (181 aa)). Mg(2+) is bound by residues D11 and D105. Residue E106 is part of the active site.

This sequence belongs to the DNA polymerase type-Y family. Monomer. Mg(2+) serves as cofactor.

It localises to the cytoplasm. It catalyses the reaction DNA(n) + a 2'-deoxyribonucleoside 5'-triphosphate = DNA(n+1) + diphosphate. Functionally, poorly processive, error-prone DNA polymerase involved in untargeted mutagenesis. Copies undamaged DNA at stalled replication forks, which arise in vivo from mismatched or misaligned primer ends. These misaligned primers can be extended by PolIV. Exhibits no 3'-5' exonuclease (proofreading) activity. May be involved in translesional synthesis, in conjunction with the beta clamp from PolIII. The protein is DNA polymerase IV of Colwellia psychrerythraea (strain 34H / ATCC BAA-681) (Vibrio psychroerythus).